Reading from the N-terminus, the 823-residue chain is Mitochondrial intermediate peptidase 2 (823 aa).

The N-terminal 33 residues, 1 to 33 (MRRLQQSLRRRSARRCPFILIPHRLLTTSYASY), are a transit peptide targeting the mitochondrion. The disordered stretch occupies residues 532–553 (IDGDGLPEDWDKPYGPGLEADK). Histidine 595 contacts Zn(2+). Glutamate 596 is an active-site residue. The Zn(2+) site is built by histidine 599 and histidine 602.

This sequence belongs to the peptidase M3 family. Zn(2+) serves as cofactor.

It localises to the mitochondrion matrix. The enzyme catalyses Release of an N-terminal octapeptide as second stage of processing of some proteins imported into the mitochondrion.. Its function is as follows. Cleaves proteins, imported into the mitochondrion, to their mature size. While most mitochondrial precursor proteins are processed to the mature form in one step by mitochondrial processing peptidase (MPP), the sequential cleavage by MIP of an octapeptide after initial processing by MPP is a required step for a subgroup of nuclear-encoded precursor proteins destined for the matrix or the inner membrane. The protein is Mitochondrial intermediate peptidase 2 (OCT2) of Cryptococcus neoformans var. neoformans serotype D (strain B-3501A) (Filobasidiella neoformans).